We begin with the raw amino-acid sequence, 257 residues long: MYIPTISPYAFKIGPIDVHWYGIFMAISIAIGGYYLYRQAMKLNYDEDFLLNLLMIVVISGVVGARLMFVLANYPEWFIKDPVQVLKIYEGGLSWHGAVLGGFLAGLYYCRKKGVRINPLEDFAVLGLSIGNILVRIGNIFNQEVLGRPTEFAFGRWPAQLVGVAMGIILLIRYFYIQKKHMPDGYQFWSFIFYYQLMRGLIEETVRDNPLIWPVYLNEKWGIGFFTLTQLVTPFILILAYWMIRRVLNDPNKQFYN.

Helical transmembrane passes span 13 to 33 (IGPI…AIGG), 49 to 69 (FLLN…RLMF), 88 to 108 (IYEG…AGLY), 123 to 143 (FAVL…IFNQ), 152 to 172 (FAFG…ILLI), 185 to 202 (GYQF…RGLI), and 223 to 243 (IGFF…AYWM). Residue arginine 136 participates in a 1,2-diacyl-sn-glycero-3-phospho-(1'-sn-glycerol) binding.

Belongs to the Lgt family.

It localises to the cell membrane. It carries out the reaction L-cysteinyl-[prolipoprotein] + a 1,2-diacyl-sn-glycero-3-phospho-(1'-sn-glycerol) = an S-1,2-diacyl-sn-glyceryl-L-cysteinyl-[prolipoprotein] + sn-glycerol 1-phosphate + H(+). Its pathway is protein modification; lipoprotein biosynthesis (diacylglyceryl transfer). Its function is as follows. Catalyzes the transfer of the diacylglyceryl group from phosphatidylglycerol to the sulfhydryl group of the N-terminal cysteine of a prolipoprotein, the first step in the formation of mature lipoproteins. In Thermoanaerobacter pseudethanolicus (strain ATCC 33223 / 39E) (Clostridium thermohydrosulfuricum), this protein is Phosphatidylglycerol--prolipoprotein diacylglyceryl transferase.